Reading from the N-terminus, the 493-residue chain is DM7 family protein GM11958 (493 aa).

The disordered stretch occupies residues 434 to 493; sequence ATKSTDTRDDGMNTADYQSQFPELEQDSEPEPEPEPEPQTEDEGEDEDIEILASLCSGSI. The segment covering 457 to 483 has biased composition (acidic residues); the sequence is LEQDSEPEPEPEPEPQTEDEGEDEDIE.

This sequence belongs to the DM7 family.

This is DM7 family protein GM11958 from Drosophila sechellia (Fruit fly).